The following is a 127-amino-acid chain: Small ribosomal subunit protein uS11 (127 aa).

Belongs to the universal ribosomal protein uS11 family. As to quaternary structure, part of the 30S ribosomal subunit. Interacts with proteins S7 and S18. Binds to IF-3.

Its function is as follows. Located on the platform of the 30S subunit, it bridges several disparate RNA helices of the 16S rRNA. Forms part of the Shine-Dalgarno cleft in the 70S ribosome. The polypeptide is Small ribosomal subunit protein uS11 (Chlorobium phaeobacteroides (strain BS1)).